The chain runs to 596 residues: Elongation factor 4 (596 aa).

The tr-type G domain occupies 2–183; that stretch reads NNIRNFSIIA…TIIRKIPPPK (182 aa). Residues 14–19 and 130–133 each bind GTP; these read DHGKST and NKID.

The protein belongs to the TRAFAC class translation factor GTPase superfamily. Classic translation factor GTPase family. LepA subfamily.

Its subcellular location is the cell inner membrane. It carries out the reaction GTP + H2O = GDP + phosphate + H(+). Its function is as follows. Required for accurate and efficient protein synthesis under certain stress conditions. May act as a fidelity factor of the translation reaction, by catalyzing a one-codon backward translocation of tRNAs on improperly translocated ribosomes. Back-translocation proceeds from a post-translocation (POST) complex to a pre-translocation (PRE) complex, thus giving elongation factor G a second chance to translocate the tRNAs correctly. Binds to ribosomes in a GTP-dependent manner. This chain is Elongation factor 4, found in Campylobacter fetus subsp. fetus (strain 82-40).